We begin with the raw amino-acid sequence, 138 residues long: Ribosome-binding factor A (138 aa).

Residues 119–138 (RSPEVQRDLGPSNEKDDEQN) are disordered.

It belongs to the RbfA family. As to quaternary structure, monomer. Binds 30S ribosomal subunits, but not 50S ribosomal subunits or 70S ribosomes.

It is found in the cytoplasm. One of several proteins that assist in the late maturation steps of the functional core of the 30S ribosomal subunit. Associates with free 30S ribosomal subunits (but not with 30S subunits that are part of 70S ribosomes or polysomes). Required for efficient processing of 16S rRNA. May interact with the 5'-terminal helix region of 16S rRNA. The polypeptide is Ribosome-binding factor A (Agrobacterium fabrum (strain C58 / ATCC 33970) (Agrobacterium tumefaciens (strain C58))).